A 726-amino-acid polypeptide reads, in one-letter code: Amino-acid acetyltransferase, mitochondrial (726 aa).

The span at 1 to 18 (MSSRTLVGLRSTTSTHLQ) shows a compositional bias: polar residues. A mitochondrion-targeting transit peptide spans 1–44 (MSSRTLVGLRSTTSTHLQRSGVAAAAAVSSSSTSSSGSAPRRCL). The tract at residues 1–64 (MSSRTLVGLR…SAEFSSSSKS (64 aa)) is disordered. Low complexity predominate over residues 20–39 (SGVAAAAAVSSSSTSSSGSA). A compositionally biased stretch (polar residues) spans 45–58 (SSASGRQVQQSAEF). The 170-residue stretch at 547-716 (DRPRLGLDDP…YEAVCRSIQP (170 aa)) folds into the N-acetyltransferase domain.

It belongs to the acetyltransferase family.

The protein localises to the mitochondrion. It carries out the reaction L-glutamate + acetyl-CoA = N-acetyl-L-glutamate + CoA + H(+). The protein operates within amino-acid biosynthesis; L-arginine biosynthesis; N(2)-acetyl-L-ornithine from L-glutamate: step 1/4. Its function is as follows. N-acetylglutamate synthase involved in arginine biosynthesis. In Aspergillus niger (strain ATCC MYA-4892 / CBS 513.88 / FGSC A1513), this protein is Amino-acid acetyltransferase, mitochondrial (arg2).